The primary structure comprises 272 residues: Ribosomal RNA small subunit methyltransferase A (272 aa).

Asn-27, Leu-29, Gly-54, Glu-75, Asp-97, and Asn-117 together coordinate S-adenosyl-L-methionine.

Belongs to the class I-like SAM-binding methyltransferase superfamily. rRNA adenine N(6)-methyltransferase family. RsmA subfamily.

The protein resides in the cytoplasm. It carries out the reaction adenosine(1518)/adenosine(1519) in 16S rRNA + 4 S-adenosyl-L-methionine = N(6)-dimethyladenosine(1518)/N(6)-dimethyladenosine(1519) in 16S rRNA + 4 S-adenosyl-L-homocysteine + 4 H(+). Functionally, specifically dimethylates two adjacent adenosines (A1518 and A1519) in the loop of a conserved hairpin near the 3'-end of 16S rRNA in the 30S particle. May play a critical role in biogenesis of 30S subunits. This Malacoplasma penetrans (strain HF-2) (Mycoplasma penetrans) protein is Ribosomal RNA small subunit methyltransferase A.